Reading from the N-terminus, the 198-residue chain is Virion membrane protein A17 precursor homolog (198 aa).

At Met1–Asn55 the chain is on the virion surface side. The helical transmembrane segment at Ile56 to Asn76 threads the bilayer. The Intravirion portion of the chain corresponds to Thr77 to Arg145. The chain crosses the membrane as a helical span at residues Ala146–Asp166. Over Arg167–Tyr198 the chain is Virion surface. Position 198 is a phosphotyrosine (Tyr198).

The protein belongs to the chordopoxvirinae A17 family. In terms of assembly, interacts (via N-terminus) with D13 scaffold; this interaction helps D13 to associate with membranes. Interacts with A14. Interacts with A27; this interaction allows A27 to be anchored in the mature virion (MV) membrane. Part of a complex composed of A17, A25, A26 and A27. Post-translationally, the 22 kDa precursor is probably cleaved by the I7 protease during virus maturation. Phosphorylated on tyrosine and threonine. Its phosphorylation state is regulated by the F10 kinase and the H1 phosphatase. Phosphorylation by F10 kinase seems to be required to form the membranes associated with IV.

The protein localises to the virion membrane. Functionally, envelope protein which participates in virus morphogenesis. Needed for an early step in viral crescent membrane formation by interacting with D13 scaffold protein. Its interaction with D13 scaffold protein leads to the formation of rigid, crescent-shaped membranes that assemble around the cytoplasmic virus factory. Membrane anchor for the protein A27. A17-A27 virus envelope protein might be involved in fusion or attachment, and can further associate to A26. In Fowlpox virus (strain NVSL) (FPV), this protein is Virion membrane protein A17 precursor homolog.